The primary structure comprises 276 residues: MALLDLCGAPRGQRPEWAAVDAGSGLRSDPGHYSFSVQAPELALPRGMQPTEFLRSFGDDQERKVQIEMAHGTTTLAFKFQHGVIVAVDSRASAGSYIATIRVNKVIEINPYLLGTMSGCAADCQYWERLLAKECRLYYLRNGERISVSAASKLLSNMMLQYRGMGLSMGSMICGWDKKGPGLYYVDDNGTRLSGQMFSTGSGNTYAYGVMDSGYRQDLSPEEAYDLARRAIVYATHRDSYSGGVVNMYHMKKDGWVKVESTDVSDLLHKYREATL.

A propeptide spans 1 to 72 (MALLDLCGAP…RKVQIEMAHG (72 aa)) (removed in mature form). Threonine 73 acts as the Nucleophile in catalysis.

The protein belongs to the peptidase T1B family. In terms of assembly, the 26S proteasome consists of a 20S proteasome core and two 19S regulatory subunits. The 20S proteasome core is composed of 28 subunits that are arranged in four stacked rings, resulting in a barrel-shaped structure. The two end rings are each formed by seven alpha subunits, and the two central rings are each formed by seven beta subunits. The catalytic chamber with the active sites is on the inside of the barrel. Component of the immunoproteasome, where it displaces the equivalent housekeeping subunit PSMB5. Component of the spermatoproteasome, a form of the proteasome specifically found in testis. Directly interacts with POMP. Interacts with TAP1. Autocleaved. The resulting N-terminal Thr residue of the mature subunit is responsible for the nucleophile proteolytic activity.

The protein resides in the cytoplasm. Its subcellular location is the nucleus. It catalyses the reaction Cleavage of peptide bonds with very broad specificity.. The proteasome is a multicatalytic proteinase complex which is characterized by its ability to cleave peptides with Arg, Phe, Tyr, Leu, and Glu adjacent to the leaving group at neutral or slightly basic pH. The proteasome has an ATP-dependent proteolytic activity. This subunit is involved in antigen processing to generate class I binding peptides. May participate in the generation of spliced peptides resulting from the ligation of two separate proteasomal cleavage products that are not contiguous in the parental protein. Required for adipocyte differentiation. This is Proteasome subunit beta type-8 (Psmb8) from Rattus norvegicus (Rat).